The primary structure comprises 677 residues: L-type lectin-domain containing receptor kinase IV.2 (677 aa).

The first 22 residues, M1–S22, serve as a signal peptide directing secretion. Residues Q23 to K291 lie on the Extracellular side of the membrane. The legume-lectin like stretch occupies residues N24–R262. 8 N-linked (GlcNAc...) asparagine glycosylation sites follow: N26, N57, N81, N128, N134, N171, N186, and N203. Residues I292 to I312 form a helical membrane-spanning segment. The Cytoplasmic segment spans residues V313–R677. Positions F347–L625 constitute a Protein kinase domain. Residues L353–V361 and K376 each bind ATP. D472 functions as the Proton acceptor in the catalytic mechanism.

This sequence in the C-terminal section; belongs to the protein kinase superfamily. Ser/Thr protein kinase family. The protein in the N-terminal section; belongs to the leguminous lectin family.

Its subcellular location is the cell membrane. The catalysed reaction is L-seryl-[protein] + ATP = O-phospho-L-seryl-[protein] + ADP + H(+). It carries out the reaction L-threonyl-[protein] + ATP = O-phospho-L-threonyl-[protein] + ADP + H(+). Required during pollen development. Its function is as follows. Involved in resistance response to the pathogenic bacteria Pseudomonas syringae. This Arabidopsis thaliana (Mouse-ear cress) protein is L-type lectin-domain containing receptor kinase IV.2.